The primary structure comprises 392 residues: Y' element ATP-dependent helicase YFL066C (392 aa).

Residues 1–175 enclose the Helicase ATP-binding domain; the sequence is MADTPSVAVQ…LQRIGLTGLA (175 aa). Position 11–18 (11–18) interacts with ATP; that stretch reads APPGYGKT. Residues 232 to 381 form the Helicase C-terminal domain; sequence KLLLALFEIE…EFYGLESKKG (150 aa).

Belongs to the helicase family. Yeast subtelomeric Y' repeat subfamily.

Its function is as follows. Catalyzes DNA unwinding and is involved in telomerase-independent telomere maintenance. This chain is Y' element ATP-dependent helicase YFL066C, found in Saccharomyces cerevisiae (strain ATCC 204508 / S288c) (Baker's yeast).